The chain runs to 409 residues: MRSGQSAALAPVLQFTNCRILRGGTLLREDLWVRGGRILDPEKLFFEERRVADEQRDCGGRILAPGFIDVQINGGFGVDFSRATEDVGSGVALVARRLLSHGVTSFCPTLVTSPPEVYHKVLPQIPVKSGGPHGAGVLGVHLEGPFISREKRGAHPEAYLRSFGANAFHDVLATYGPLDNVCIVTLAPELDRSHEVIQALTAKGIRVSLGHSVADLRAAEVAVQSGATFITHLFNAMLPFHHRDPGIVGLLTSDQLPPGHCIFYGMIADGIHTNPAALRIAHRAHPQGLVLVTDAVPALGLGNGRHTLGQQEVEVDGLIAYIAGTKTLSGSIAPMDVCIRHFLQATGCSVESALEAASLHPAQLLGLEKTKGSLDFGADADFVVLDDTLHVQATYISGELVWQAEEAGL.

Glu143 contributes to the a divalent metal cation binding site. Residue 154-155 (AH) coordinates substrate. The a divalent metal cation site is built by His211 and His232. Residues 235–236 (NA), Arg243, and 269–272 (DGIH) each bind substrate. Asp294 serves as the catalytic Proton donor/acceptor. 328-330 (LSG) lines the substrate pocket.

This sequence belongs to the metallo-dependent hydrolases superfamily. NagA family. A divalent metal cation is required as a cofactor.

The enzyme catalyses N-acetyl-D-glucosamine 6-phosphate + H2O = D-glucosamine 6-phosphate + acetate. Its pathway is amino-sugar metabolism; N-acetylneuraminate degradation. Functionally, hydrolyzes the N-glycolyl group from N-glycolylglucosamine 6-phosphate (GlcNGc-6-P) in the N-glycolylneuraminic acid (Neu5Gc) degradation pathway. The protein is N-acetylglucosamine-6-phosphate deacetylase (Amdhd2) of Rattus norvegicus (Rat).